The primary structure comprises 121 residues: Small ribosomal subunit protein uS13 (121 aa).

Residues 99 to 121 (GQRTRTNARTRRGARKTVAGKKK) are disordered. The span at 100–121 (QRTRTNARTRRGARKTVAGKKK) shows a compositional bias: basic residues.

This sequence belongs to the universal ribosomal protein uS13 family. Part of the 30S ribosomal subunit. Forms a loose heterodimer with protein S19. Forms two bridges to the 50S subunit in the 70S ribosome.

Functionally, located at the top of the head of the 30S subunit, it contacts several helices of the 16S rRNA. In the 70S ribosome it contacts the 23S rRNA (bridge B1a) and protein L5 of the 50S subunit (bridge B1b), connecting the 2 subunits; these bridges are implicated in subunit movement. Contacts the tRNAs in the A and P-sites. The polypeptide is Small ribosomal subunit protein uS13 (Synechococcus sp. (strain RCC307)).